The primary structure comprises 100 residues: Large ribosomal subunit protein uL23 (100 aa).

It belongs to the universal ribosomal protein uL23 family. In terms of assembly, part of the 50S ribosomal subunit. Contacts protein L29, and trigger factor when it is bound to the ribosome.

In terms of biological role, one of the early assembly proteins it binds 23S rRNA. One of the proteins that surrounds the polypeptide exit tunnel on the outside of the ribosome. Forms the main docking site for trigger factor binding to the ribosome. In Shigella dysenteriae serotype 1 (strain Sd197), this protein is Large ribosomal subunit protein uL23.